The sequence spans 250 residues: Heat stress transcription factor C-1b (250 aa).

Residues 129 to 182 (EEGEEVRGTIEAVQRLREEQRGMEEELQAMDQRLRAAESRPGQMMAFLAKLADE) are a coiled coil. A hydrophobic repeat HR-A/B region spans residues 144-180 (LREEQRGMEEELQAMDQRLRAAESRPGQMMAFLAKLA). Positions 199–226 (AAGNNGSDPCKRRRIGADTGRGGVATGG) are disordered. The Nuclear localization signal motif lies at 209–212 (KRRR).

It belongs to the HSF family. Class C subfamily. Homotrimer. Exhibits temperature-dependent phosphorylation.

The protein localises to the nucleus. Its function is as follows. Transcriptional regulator that specifically binds DNA of heat shock promoter elements (HSE). The sequence is that of Heat stress transcription factor C-1b (HSFC1B) from Oryza sativa subsp. japonica (Rice).